A 147-amino-acid polypeptide reads, in one-letter code: Hemoglobin subunit beta (147 aa).

In terms of domain architecture, Globin spans 3-147 (EWTDKERSII…VVSALGKQYH (145 aa)). Heme b-binding residues include H64 and H93.

This sequence belongs to the globin family. In terms of assembly, heterotetramer of two alpha chains and two beta chains. Red blood cells.

In terms of biological role, involved in oxygen transport from gills to the various peripheral tissues. The chain is Hemoglobin subunit beta (hbb) from Trematomus hansoni (Striped rockcod).